The sequence spans 326 residues: MELSRVAVALGPTGQLLLFLSFQTLAAQAADTCPEVKVVGLEGSDKLSILRGCPGLPGAAGPKGEAGANGPKGERGSPGVVGKAGPAGPKGDRGEKGARGEKGEPGQLQSCATGPRTCKELLTRGHFLSGWHTIYLPDCQPLTVLCDMDTDGGGWTVFQRRSDGSVDFYRDWAAYKRGFGSQLGEFWLGNDHIHALTAQGTSELRVDLVDFEGNHQFAKYRSFQVAGEAEKYKLVLGGFLEGNAGDSLSSHRDQFFSTKDQDNDNHSGNCAEQYHGAWWYNACHSSNLNGRYLRGLHTSYANGVNWRSGRGYNYSYQVSEMKVRLT.

Positions 1–29 (MELSRVAVALGPTGQLLLFLSFQTLAAQA) are cleaved as a signal peptide. A Collagen-like domain is found at 55–93 (GLPGAAGPKGEAGANGPKGERGSPGVVGKAGPAGPKGDR). Composition is skewed to low complexity over residues 61–71 (GPKGEAGANGP) and 78–89 (PGVVGKAGPAGP). The disordered stretch occupies residues 61-110 (GPKGEAGANGPKGERGSPGVVGKAGPAGPKGDRGEKGARGEKGEPGQLQS). Basic and acidic residues predominate over residues 90 to 104 (KGDRGEKGARGEKGE). A Fibrinogen C-terminal domain is found at 109–326 (QSCATGPRTC…QVSEMKVRLT (218 aa)). 2 disulfides stabilise this stretch: Cys111–Cys139 and Cys118–Cys146. Residues 115-154 (PRTCKELLTRGHFLSGWHTIYLPDCQPLTVLCDMDTDGGG) form an a domain; contributes to trimerization region. Residues 155–243 (WTVFQRRSDG…LVLGGFLEGN (89 aa)) are b domain; contributes to trimerization. Residues Asp262 and Asp264 each contribute to the Ca(2+) site. Asn265 is a glycosylation site (N-linked (GlcNAc...) asparagine). A disulfide bridge connects residues Cys270 and Cys283. 282–284 (ACH) contacts a carbohydrate. N-linked (GlcNAc...) asparagine glycosylation is present at Asn313. A p domain region spans residues 317-326 (QVSEMKVRLT).

It belongs to the ficolin lectin family. Homotrimer. Interacts with elastin/ELN. Interacts (via Fibrinogen C-terminal domain) with FFAR2. Interacts with CRP; may regulate monocyte activation by FCN1. As to expression, most abundantly expressed in placenta and lung.

It localises to the secreted. It is found in the cell membrane. Functionally, extracellular lectin functioning as a pattern-recognition receptor in innate immunity. Binds the sugar moieties of pathogen-associated molecular patterns (PAMPs) displayed on microbes and activates the lectin pathway of the complement system. May also activate monocytes through a G protein-coupled receptor, FFAR2, inducing the secretion of interleukin-8/IL-8. Binds preferentially to 9-O-acetylated 2-6-linked sialic acid derivatives and to various glycans containing sialic acid engaged in a 2-3 linkage. In Sus scrofa (Pig), this protein is Ficolin-1 (FCN1).